The sequence spans 258 residues: Venom plasminogen activator TSV-PA (258 aa).

A signal peptide spans 1-18 (MELIRVLANLLILQLSYA). Residues 19–24 (QKSSEL) constitute a propeptide that is removed on maturation. Residues 25-249 (VFGGDECNIN…YLDWIKSIIA (225 aa)) enclose the Peptidase S1 domain. 6 disulfide bridges follow: C31–C163, C50–C66, C98–C256, C142–C210, C174–C189, and C200–C225. Catalysis depends on charge relay system residues H65 and D110. N185 is a glycosylation site (N-linked (GlcNAc...) asparagine). The active-site Charge relay system is S204.

Belongs to the peptidase S1 family. Snake venom subfamily. As to quaternary structure, monomer. In terms of tissue distribution, expressed by the venom gland.

Its subcellular location is the secreted. In terms of biological role, snake venom serine protease that activates plasminogen. This is Venom plasminogen activator TSV-PA from Trimeresurus stejnegeri (Chinese green tree viper).